A 94-amino-acid polypeptide reads, in one-letter code: Small ribosomal subunit protein uS19 (94 aa).

Residues 75–94 form a disordered region; sequence SHTRTFKGHAGDKKAAGSKR. Basic and acidic residues predominate over residues 83–94; sequence HAGDKKAAGSKR.

It belongs to the universal ribosomal protein uS19 family.

Its function is as follows. Protein S19 forms a complex with S13 that binds strongly to the 16S ribosomal RNA. The polypeptide is Small ribosomal subunit protein uS19 (Nitrosomonas europaea (strain ATCC 19718 / CIP 103999 / KCTC 2705 / NBRC 14298)).